The sequence spans 204 residues: Imidazoleglycerol-phosphate dehydratase (204 aa).

The protein belongs to the imidazoleglycerol-phosphate dehydratase family.

It localises to the cytoplasm. The catalysed reaction is D-erythro-1-(imidazol-4-yl)glycerol 3-phosphate = 3-(imidazol-4-yl)-2-oxopropyl phosphate + H2O. It functions in the pathway amino-acid biosynthesis; L-histidine biosynthesis; L-histidine from 5-phospho-alpha-D-ribose 1-diphosphate: step 6/9. This chain is Imidazoleglycerol-phosphate dehydratase, found in Corynebacterium jeikeium (strain K411).